The primary structure comprises 408 residues: Succinylornithine transaminase (408 aa).

Lysine 252 is modified (N6-(pyridoxal phosphate)lysine).

Belongs to the class-III pyridoxal-phosphate-dependent aminotransferase family. AstC subfamily. Pyridoxal 5'-phosphate serves as cofactor.

The enzyme catalyses N(2)-succinyl-L-ornithine + 2-oxoglutarate = N-succinyl-L-glutamate 5-semialdehyde + L-glutamate. The protein operates within amino-acid degradation; L-arginine degradation via AST pathway; L-glutamate and succinate from L-arginine: step 3/5. Its function is as follows. Catalyzes the transamination of N(2)-succinylornithine and alpha-ketoglutarate into N(2)-succinylglutamate semialdehyde and glutamate. Can also act as an acetylornithine aminotransferase. In Salmonella newport (strain SL254), this protein is Succinylornithine transaminase.